We begin with the raw amino-acid sequence, 945 residues long: Kinesin-like protein KIN-UA (945 aa).

The tract at residues 1–54 (MAANGRASVRPVERHGAPPRPAGRSRSVAPPSRRPSPSPSRARPAAADNDGGSD) is disordered. Residues 22-31 (AGRSRSVAPP) are compositionally biased toward low complexity. In terms of domain architecture, Kinesin motor spans 57 to 399 (RVRVAVRLRP…IMFGQRAMKI (343 aa)). 142–149 (GQTGTGKT) lines the ATP pocket. The D-BOX motif lies at 369–377 (RTSLIVTIG). A coiled-coil region spans residues 415–644 (YKKVEHEVDH…ILRLKQSLAD (230 aa)). 4 ARM repeats span residues 683-722 (RSNISKIFEEVGLPNVLALLKSDELEVQIHAVKVVANLAA), 724-764 (DVNQ…NLAM), 766-806 (GSNQ…NLCG), and 808-847 (EKLHVMLKQDGGIKALLGMFRTGHNEVIAQIARGMANFAK).

It belongs to the TRAFAC class myosin-kinesin ATPase superfamily. Kinesin family. Ungrouped subfamily.

The protein localises to the cytoplasm. It localises to the cytoskeleton. The polypeptide is Kinesin-like protein KIN-UA (Oryza sativa subsp. japonica (Rice)).